A 195-amino-acid polypeptide reads, in one-letter code: Protein Nef (195 aa).

A lipid anchor (N-myristoyl glycine; by host) is attached at G2. The N-terminal; associates with the host plasma membrane stretch occupies residues 2 to 53; that stretch reads GNIFGRWPGARKAIEDLHNTSSEPVGQASQDLQNKGGLTTNTLGTSADVLEY. Residues 7–22 form a necessary for MHC-I internalization region; sequence RWPGARKAIEDLHNTS. Residues 59 to 61 form an acidic region; that stretch reads EEE. The SH3-binding stretch occupies residues 65 to 74; the sequence is PVRPAVPMRP. Residues 65-74 are SH3-binding; interaction with Src family tyrosine kinases; sequence PVRPAVPMRP. The short motif at 68–71 is the PxxP element; the sequence is PAVP. The tract at residues 104 to 120 is mediates dimerization; it reads AILDTWMYNTQGVFPDW. Positions 144-171 are binding to ATP6V1H; sequence VDPPEDDEKNILLHPACSHGTTDPDGET. Positions 155–156 match the Di-leucine internalization motif; necessary for CD4 internalization motif; that stretch reads LL.

The protein belongs to the lentivirus primate group Nef protein family. Homodimer.

Its subcellular location is the host cell membrane. The protein resides in the host cytoplasm. It localises to the host perinuclear region. The protein localises to the virion. It is found in the secreted. Its function is as follows. Factor of infectivity and pathogenicity, required for optimal virus replication. Alters numerous pathways of T-lymphocyte function and down-regulates immunity surface molecules in order to evade host defense and increase viral infectivity. Alters the functionality of other immunity cells, like dendritic cells, monocytes/macrophages and NK cells. One of the earliest and most abundantly expressed viral proteins. In terms of biological role, in infected CD4(+) T-lymphocytes, down-regulates the surface MHC-I, mature MHC-II, CD4, CD28 and probably other immunity surface molecules. In consequence infected cells are masked for immune recognition by cytotoxic T-lymphocytes. Decreasing the number of immune receptors also prevents reinfection by more HIV particles (superinfection). Bypasses host T-cell signaling by inducing a transcriptional program nearly identical to that of anti-CD3 cell activation. Interaction with TCR-zeta chain up-regulates the Fas ligand (FasL). Increasing surface FasL molecules and decreasing surface MHC-I molecules on infected CD4(+) cells send attacking cytotoxic CD8+ T-lymphocytes into apoptosis. Functionally, plays a role in optimizing the host cell environment for viral replication without causing cell death by apoptosis. Protects the infected cells from apoptosis in order to keep them alive until the next virus generation is ready to strike. The sequence is that of Protein Nef from Pan troglodytes (Chimpanzee).